The sequence spans 553 residues: uncharacterized protein (553 aa).

2 helical membrane-spanning segments follow: residues 6 to 26 (IKIF…QVDA) and 524 to 544 (SYWI…GYVF).

The protein to M.jannaschii MJ0795 and MJ1506.

It localises to the cell membrane. This is an uncharacterized protein from Methanocaldococcus jannaschii (strain ATCC 43067 / DSM 2661 / JAL-1 / JCM 10045 / NBRC 100440) (Methanococcus jannaschii).